The sequence spans 274 residues: Large ribosomal subunit protein uL2 (274 aa).

Disordered stretches follow at residues 28-53 (KPYA…TVRH) and 223-274 (VAMN…RRTK). Low complexity predominate over residues 39-48 (KSGGRNNNGR). Over residues 254–274 (KGAKTRKNKRTDKFIVRRRTK) the composition is skewed to basic residues.

Belongs to the universal ribosomal protein uL2 family. As to quaternary structure, part of the 50S ribosomal subunit. Forms a bridge to the 30S subunit in the 70S ribosome.

Its function is as follows. One of the primary rRNA binding proteins. Required for association of the 30S and 50S subunits to form the 70S ribosome, for tRNA binding and peptide bond formation. It has been suggested to have peptidyltransferase activity; this is somewhat controversial. Makes several contacts with the 16S rRNA in the 70S ribosome. The polypeptide is Large ribosomal subunit protein uL2 (Pseudoalteromonas translucida (strain TAC 125)).